We begin with the raw amino-acid sequence, 256 residues long: Imidazole glycerol phosphate synthase subunit HisF (256 aa).

Catalysis depends on residues Asp-12 and Asp-131.

It belongs to the HisA/HisF family. In terms of assembly, heterodimer of HisH and HisF.

Its subcellular location is the cytoplasm. The catalysed reaction is 5-[(5-phospho-1-deoxy-D-ribulos-1-ylimino)methylamino]-1-(5-phospho-beta-D-ribosyl)imidazole-4-carboxamide + L-glutamine = D-erythro-1-(imidazol-4-yl)glycerol 3-phosphate + 5-amino-1-(5-phospho-beta-D-ribosyl)imidazole-4-carboxamide + L-glutamate + H(+). It functions in the pathway amino-acid biosynthesis; L-histidine biosynthesis; L-histidine from 5-phospho-alpha-D-ribose 1-diphosphate: step 5/9. In terms of biological role, IGPS catalyzes the conversion of PRFAR and glutamine to IGP, AICAR and glutamate. The HisF subunit catalyzes the cyclization activity that produces IGP and AICAR from PRFAR using the ammonia provided by the HisH subunit. This is Imidazole glycerol phosphate synthase subunit HisF from Ectopseudomonas mendocina (strain ymp) (Pseudomonas mendocina).